A 148-amino-acid polypeptide reads, in one-letter code: Large ribosomal subunit protein uL15 (148 aa).

The interval 1 to 61 (MELNNLKPAI…GGQMPMQRRL (61 aa)) is disordered. The span at 30 to 39 (TATKGHKGQK) shows a compositional bias: basic residues.

It belongs to the universal ribosomal protein uL15 family. As to quaternary structure, part of the 50S ribosomal subunit.

Its function is as follows. Binds to the 23S rRNA. The chain is Large ribosomal subunit protein uL15 from Geobacter metallireducens (strain ATCC 53774 / DSM 7210 / GS-15).